Consider the following 769-residue polypeptide: Polymeric immunoglobulin receptor (769 aa).

Positions 1-18 are cleaved as a signal peptide; sequence MRLSLFALLVTVFSGVST. The Extracellular portion of the chain corresponds to 19-643; that stretch reads QSPIFGPQDV…SAGGQSGSSK (625 aa). In terms of domain architecture, Ig-like V-type 1; required for binding to polymeric IgA and IgM spans 21–126; sequence PIFGPQDVSS…RGLFFDVSLE (106 aa). C40 and C110 are joined by a disulfide. N-linked (GlcNAc...) asparagine glycosylation is found at N90, N135, and N206. Ig-like V-type domains are found at residues 135-237, 240-341, 353-457, and 463-563; these read NDTH…DLQV, PEPE…VQAW, NSRS…LQVA, and PDLE…IYVA. Intrachain disulfides connect C152–C220, C257–C324, and C370–C440. Residue N471 is glycosylated (N-linked (GlcNAc...) asparagine). A disulfide bond links C484 and C546. Disordered stretches follow at residues 569-604 and 619-640; these read RGSPHINPTDANARAKDAPEEEAMESSVREDENKAN and AGDQAQENRASGNAGSAGGQSG. The segment covering 595 to 604 has biased composition (basic and acidic residues); that stretch reads SVREDENKAN. Residues 644–666 form a helical membrane-spanning segment; sequence VLFSTLVPLGLVLAVGAVAVWVA. Over 667-769 the chain is Cytoplasmic; sequence RVRHRKNVDR…AQVHDGPQEA (103 aa). Phosphoserine occurs at positions 678, 687, 694, and 740. Residues 719-741 are disordered; sequence EIETTTECTTEPEESKKAKRSSK. The span at 731–741 shows a compositional bias: basic and acidic residues; it reads EESKKAKRSSK.

As to quaternary structure, interacts (mainly via CDR1-like domain) with dimeric IgA. Interacts (mainly via CDR2-like domain) with pentameric IgM. In terms of assembly, either free or part of the secretory IgA (sIgA) complex that consists of two, four or five IgA monomers, and two additional non-Ig polypeptides, namely the JCHAIN and the secretory component (the proteolytic product of PIGR). Free secretory component interacts with bacterial antigens toxA of C.difficile and eae of E.coli. N-glycosylated. N-glycosylation is required for anchoring IgA molecules to mucus, but is not necessary for Ig binding.

Its subcellular location is the cell membrane. It is found in the secreted. Its function is as follows. Mediates selective transcytosis of polymeric IgA and IgM across mucosal epithelial cells. Binds polymeric IgA and IgM at the basolateral surface of epithelial cells. The complex is then transported across the cell to be secreted at the apical surface. During this process, a cleavage occurs that separates the extracellular (known as the secretory component) from the transmembrane segment. Functionally, through its N-linked glycans ensures anchoring of secretory IgA (sIgA) molecules to mucus lining the epithelial surface to neutralize extracellular pathogens. On its own (free form) may act as a non-specific microbial scavenger to prevent pathogen interaction with epithelial cells. The polypeptide is Polymeric immunoglobulin receptor (Pigr) (Rattus norvegicus (Rat)).